Reading from the N-terminus, the 161-residue chain is NADH-quinone oxidoreductase subunit C (161 aa).

The protein belongs to the complex I 30 kDa subunit family. NDH-1 is composed of 14 different subunits. Subunits NuoB, C, D, E, F, and G constitute the peripheral sector of the complex.

Its subcellular location is the cell inner membrane. The enzyme catalyses a quinone + NADH + 5 H(+)(in) = a quinol + NAD(+) + 4 H(+)(out). Its function is as follows. NDH-1 shuttles electrons from NADH, via FMN and iron-sulfur (Fe-S) centers, to quinones in the respiratory chain. The immediate electron acceptor for the enzyme in this species is believed to be ubiquinone. Couples the redox reaction to proton translocation (for every two electrons transferred, four hydrogen ions are translocated across the cytoplasmic membrane), and thus conserves the redox energy in a proton gradient. This Citrifermentans bemidjiense (strain ATCC BAA-1014 / DSM 16622 / JCM 12645 / Bem) (Geobacter bemidjiensis) protein is NADH-quinone oxidoreductase subunit C.